Consider the following 661-residue polypeptide: uncharacterized protein (661 aa).

Positions 1–24 are cleaved as a signal peptide; sequence MKTLKTLKIFIIVFIASVSLASFA. 6 helical membrane passes run 226-246, 254-274, 410-430, 436-456, 469-489, and 562-582; these read IIGAALILYTMFFAFNMALNT, IALFVIKFLFVAYFSIGLGPL, IILAAGLVFSVIFLSILLYFI, CMITIYVMTYISPIFIPMALF, VCISCALQPAVVAGFIALLIT, and VVSILAELLCVLVFSVIFYYF. A disordered region spans residues 629–661; the sequence is GKPLVGDKPGVGGKRKEGEQQGGDLASGSGGGK.

This sequence belongs to the TrbL/VirB6 family.

The protein localises to the cell membrane. This is an uncharacterized protein from Rickettsia conorii (strain ATCC VR-613 / Malish 7).